A 78-amino-acid chain; its full sequence is Protein FAM240B (78 aa).

The protein belongs to the FAM240 family.

The protein is Protein FAM240B of Homo sapiens (Human).